Consider the following 261-residue polypeptide: Succinate dehydrogenase [ubiquinone] iron-sulfur subunit, mitochondrial (261 aa).

Residues 31–122 (FKIYRWNPDT…DVKIYPLPHM (92 aa)) enclose the 2Fe-2S ferredoxin-type domain. Cys82, Cys87, Cys90, and Cys102 together coordinate [2Fe-2S] cluster. One can recognise a 4Fe-4S ferredoxin-type domain in the interval 164–194 (DRKKLDGLYECILCACCSTACPSYWWNNEQY). Cys174, Cys177, and Cys180 together coordinate [4Fe-4S] cluster. Cys184 serves as a coordination point for [3Fe-4S] cluster. Trp189 is a binding site for a ubiquinone. Residues Cys231 and Cys237 each coordinate [3Fe-4S] cluster. Cys241 contributes to the [4Fe-4S] cluster binding site.

The protein belongs to the succinate dehydrogenase/fumarate reductase iron-sulfur protein family. Component of complex II composed of four subunits: a flavoprotein (FP), an iron-sulfur protein (IP), and a cytochrome b composed of a large and a small subunit. The cofactor is [2Fe-2S] cluster. [3Fe-4S] cluster serves as cofactor. Requires [4Fe-4S] cluster as cofactor.

It is found in the mitochondrion inner membrane. The catalysed reaction is a quinone + succinate = fumarate + a quinol. It functions in the pathway carbohydrate metabolism; tricarboxylic acid cycle; fumarate from succinate (eukaryal route): step 1/1. Its function is as follows. Iron-sulfur protein (IP) subunit of succinate dehydrogenase (SDH) that is involved in complex II of the mitochondrial electron transport chain and is responsible for transferring electrons from succinate to ubiquinone (coenzyme Q). This chain is Succinate dehydrogenase [ubiquinone] iron-sulfur subunit, mitochondrial (SDH2), found in Eremothecium gossypii (strain ATCC 10895 / CBS 109.51 / FGSC 9923 / NRRL Y-1056) (Yeast).